A 38-amino-acid chain; its full sequence is Large ribosomal subunit protein bL36 (38 aa).

Belongs to the bacterial ribosomal protein bL36 family.

This Psychrobacter arcticus (strain DSM 17307 / VKM B-2377 / 273-4) protein is Large ribosomal subunit protein bL36.